A 404-amino-acid chain; its full sequence is MKEPFQKALGIIQTLQQHGYEAYFVGGAVRDLLLNREIGDIDIATSALPDEVMQLFPKTIDIGSQHGTVVVVHNGISYEVTTFRTESEYEDYRRPGAVTFVRSLYEDLQRRDFTMNAIAMDAEGKLIDPFGGQEAIANRIICTVGDPKARFSEDALRMMRAIRFVGQLGFSLDEETKQAIIENAALLAHISVERMTMEFEKLLEGPFASRALSLLVETGLFLYLPMLRDKENELQAAARYNWRLLDSRGQRWGFLCYILCIDSAADFLRAWKLPNRLIKEVEMALRILQTIPSSSDWTKERLFEFGLEHAIAAETIRSVASGENVEEHRKKLNELFMSLPIKTKKELAVSGNDIMKWFGKPGGPWVKEILTLIERAVIHGEVDNHKERIHEWLIHRNLIRGENC.

2 residues coordinate ATP: Gly-27 and Arg-30. 2 residues coordinate CTP: Gly-27 and Arg-30. Mg(2+)-binding residues include Asp-40 and Asp-42. ATP is bound by residues Arg-111, Asp-154, Arg-157, Arg-160, and Arg-163. Positions 111, 154, 157, 160, and 163 each coordinate CTP.

The protein belongs to the tRNA nucleotidyltransferase/poly(A) polymerase family. Bacterial CCA-adding enzyme type 3 subfamily. As to quaternary structure, homodimer. It depends on Mg(2+) as a cofactor.

It catalyses the reaction a tRNA precursor + 2 CTP + ATP = a tRNA with a 3' CCA end + 3 diphosphate. The enzyme catalyses a tRNA with a 3' CCA end + 2 CTP + ATP = a tRNA with a 3' CCACCA end + 3 diphosphate. Catalyzes the addition and repair of the essential 3'-terminal CCA sequence in tRNAs without using a nucleic acid template. Adds these three nucleotides in the order of C, C, and A to the tRNA nucleotide-73, using CTP and ATP as substrates and producing inorganic pyrophosphate. tRNA 3'-terminal CCA addition is required both for tRNA processing and repair. Also involved in tRNA surveillance by mediating tandem CCA addition to generate a CCACCA at the 3' terminus of unstable tRNAs. While stable tRNAs receive only 3'-terminal CCA, unstable tRNAs are marked with CCACCA and rapidly degraded. This Geobacillus sp. (strain WCH70) protein is CCA-adding enzyme.